A 376-amino-acid chain; its full sequence is Chaperone protein DnaJ (376 aa).

Residues 5–70 (DYYEVLGVAK…QKRAAYDQYG (66 aa)) form the J domain. The segment at 136–214 (GYDTQIRVPS…CHGSGKVKET (79 aa)) adopts a CR-type zinc-finger fold. Residues Cys-149, Cys-152, Cys-166, Cys-169, Cys-188, Cys-191, Cys-202, and Cys-205 each contribute to the Zn(2+) site. CXXCXGXG motif repeat units follow at residues 149–156 (CGICHGSG), 166–173 (CPTCHGQG), 188–195 (CPKCHGTG), and 202–209 (CVHCHGSG).

It belongs to the DnaJ family. As to quaternary structure, homodimer. It depends on Zn(2+) as a cofactor.

Its subcellular location is the cytoplasm. Participates actively in the response to hyperosmotic and heat shock by preventing the aggregation of stress-denatured proteins and by disaggregating proteins, also in an autonomous, DnaK-independent fashion. Unfolded proteins bind initially to DnaJ; upon interaction with the DnaJ-bound protein, DnaK hydrolyzes its bound ATP, resulting in the formation of a stable complex. GrpE releases ADP from DnaK; ATP binding to DnaK triggers the release of the substrate protein, thus completing the reaction cycle. Several rounds of ATP-dependent interactions between DnaJ, DnaK and GrpE are required for fully efficient folding. Also involved, together with DnaK and GrpE, in the DNA replication of plasmids through activation of initiation proteins. The polypeptide is Chaperone protein DnaJ (Burkholderia thailandensis (strain ATCC 700388 / DSM 13276 / CCUG 48851 / CIP 106301 / E264)).